Consider the following 178-residue polypeptide: Large ribosomal subunit protein uL5 (178 aa).

Belongs to the universal ribosomal protein uL5 family. Part of the 50S ribosomal subunit; part of the 5S rRNA/L5/L18/L25 subcomplex. Contacts the 5S rRNA and the P site tRNA. Forms a bridge to the 30S subunit in the 70S ribosome.

In terms of biological role, this is one of the proteins that bind and probably mediate the attachment of the 5S RNA into the large ribosomal subunit, where it forms part of the central protuberance. In the 70S ribosome it contacts protein S13 of the 30S subunit (bridge B1b), connecting the 2 subunits; this bridge is implicated in subunit movement. Contacts the P site tRNA; the 5S rRNA and some of its associated proteins might help stabilize positioning of ribosome-bound tRNAs. The chain is Large ribosomal subunit protein uL5 from Prochlorococcus marinus (strain MIT 9515).